The sequence spans 995 residues: Beta-agarase A (995 aa).

The first 20 residues, 1 to 20 (MKIKFLSAAIAASLALPLSA), serve as a signal peptide directing secretion. Positions 936-972 (GTNIGVSHSGPEAPDPGEPVDPPIDPPTPPTGGVTGG) are disordered. Residues 948–965 (APDPGEPVDPPIDPPTPP) are compositionally biased toward pro residues.

The protein belongs to the glycosyl hydrolase 50 family.

The enzyme catalyses Hydrolysis of (1-&gt;4)-beta-D-galactosidic linkages in agarose, giving the tetramer as the predominant product.. In terms of biological role, hydrolyzes agarose and also neoagarotetraose to yield neoagarobiose. The polypeptide is Beta-agarase A (agaA) (Vibrio sp. (strain JT0107)).